Reading from the N-terminus, the 175-residue chain is Ribosome maturation factor RimM (175 aa).

The PRC barrel domain maps to 100–174; that stretch reads EDEYYWNDVI…VKHKIITVIW (75 aa).

The protein belongs to the RimM family. In terms of assembly, binds ribosomal protein uS19.

The protein resides in the cytoplasm. An accessory protein needed during the final step in the assembly of 30S ribosomal subunit, possibly for assembly of the head region. Essential for efficient processing of 16S rRNA. May be needed both before and after RbfA during the maturation of 16S rRNA. It has affinity for free ribosomal 30S subunits but not for 70S ribosomes. This is Ribosome maturation factor RimM from Buchnera aphidicola subsp. Schizaphis graminum (strain Sg).